We begin with the raw amino-acid sequence, 336 residues long: MERKISRIHLVSEPSITHFLQVSWEKTLESGFVITLTDGHSAWTGTVSESEISQEADDMAMEKGKYVGELRKALLSGAGPADVYTFNFSKESCYFFFEKNLKDVSFRLGSFNLEKVENPAEVIRELICYCLDTIAENQAKNEHLQKENERLLRDWNDVQGRFEKCVSAKEALETDLYKRFILVLNEKKTKIRSLHNKLLNAAQEREKDIKQEGETAICSEMTADRDPVYDESTDEESENQTDLSGLASAAVSKDDSIISSLDVTDIAPSRKRRQRMQRNLGTEPKMAPQENQLQEKENSRPDSSLPETSKKEHISAENMSLETLRNSSPEDLFDEI.

The tract at residues 1–213 is interaction with IFFO1; sequence MERKISRIHL…EREKDIKQEG (213 aa). Position 53 is a phosphoserine; by PRKDC (serine 53). Coiled-coil stretches lie at residues 131–165 and 184–212; these read LDTI…FEKC and LNEK…IKQE. The interaction with LIG4 stretch occupies residues 180–213; the sequence is FILVLNEKKTKIRSLHNKLLNAAQEREKDIKQEG. Serine 193 is modified (phosphoserine; by PRKDC). Lysine 210 is covalently cross-linked (Glycyl lysine isopeptide (Lys-Gly) (interchain with G-Cter in SUMO)). Residues 212 to 249 are disordered; sequence EGETAICSEMTADRDPVYDESTDEESENQTDLSGLASA. Position 229 is a phosphotyrosine (tyrosine 229). Residues 229–239 show a composition bias toward acidic residues; the sequence is YDESTDEESEN. Residue serine 232 is modified to Phosphoserine. Threonine 233 is subject to Phosphothreonine; by CK2. Phosphoserine occurs at positions 237 and 256. The residue at position 260 (serine 260) is a Phosphoserine; by PRKDC. Residues 264 to 336 form a disordered region; that stretch reads TDIAPSRKRR…SSPEDLFDEI (73 aa). The Nuclear localization signal motif lies at 270 to 275; the sequence is RKRRQR. Residue lysine 296 forms a Glycyl lysine isopeptide (Lys-Gly) (interchain with G-Cter in ubiquitin) linkage. Serine 303, serine 304, serine 315, and serine 320 each carry phosphoserine; by PRKDC. A compositionally biased stretch (polar residues) spans 317 to 329; sequence ENMSLETLRNSSP. Threonine 323 carries the post-translational modification Phosphothreonine; by PRKDC. A phosphoserine; by PRKDC mark is found at serine 327 and serine 328.

This sequence belongs to the XRCC4-XLF family. XRCC4 subfamily. Homodimer and homotetramer in solution. Interacts with NHEJ1/XLF; the interaction is direct and is mediated via a head-to-head interaction between N-terminal head regions. Interacts with LIG4; the LIG4-XRCC4 subcomplex has a 1:2 stoichiometry and XRCC4 is required for LIG4 stability. Component of the core long-range non-homologous end joining (NHEJ) complex (also named DNA-PK complex) composed of PRKDC, LIG4, XRCC4, XRCC6/Ku70, XRCC5/Ku86 and NHEJ1/XLF. Additional component of the NHEJ complex includes PAXX. Following autophosphorylation, PRKDC dissociates from DNA, leading to formation of the short-range NHEJ complex, composed of LIG4, XRCC4, XRCC6/Ku70, XRCC5/Ku86 and NHEJ1/XLF. Interacts with PRKDC; the interaction is direct. Interacts with XRCC6/Ku70; the interaction is direct. Interacts with APTX and APLF. Forms a heterotetramer with IFFO1; the interaction involves LIG4-free XRCC4 and leads to the relocalization of IFFO1 to the sites of DNA damage. Interacts with PNKP; mainly interacts with PNKP when phosphorylated at Thr-233, but is also able to interact at much lower level with PNKP when not unphosphorylated. Interacts with POLL (DNA polymerase lambda). In terms of assembly, interacts with XKR4; interacts with the processed form of XKR4, which is cleaved by caspase. Phosphorylated by PRKDC at the C-terminus in response to DNA damage; Ser-260 and Ser-320 constitute the main phosphorylation sites. Phosphorylations by PRKDC at the C-terminus of XRCC4 and NHEJ1/XLF are highly redundant and regulate ability of the XRCC4-NHEJ1/XLF subcomplex to bridge DNA. Phosphorylation by PRKDC does not prevent interaction with NHEJ1/XLF but disrupts ability to bridge DNA and promotes detachment from DNA. Phosphorylation at Ser-327 and Ser-328 by PRKDC promotes recognition by the SCF(FBXW7) complex and subsequent ubiquitination via 'Lys-63'-linked ubiquitin. Phosphorylation at Thr-233 by CK2 promotes interaction with PNKP; regulating PNKP activity and localization to DNA damage sites. Phosphorylation by CK2 promotes interaction with APTX. In terms of processing, ubiquitinated at Lys-296 by the SCF(FBXW7) complex via 'Lys-63'-linked ubiquitination, thereby promoting double-strand break repair: the SCF(FBXW7) complex specifically recognizes XRCC4 when phosphorylated at Ser-327 and Ser-328 by PRKDC, and 'Lys-63'-linked ubiquitination facilitates DNA non-homologous end joining (NHEJ) by enhancing association with XRCC5/Ku80 and XRCC6/Ku70. Monoubiquitinated. Post-translationally, undergoes proteolytic processing by caspase-3 (CASP3). This generates the protein XRCC4, C-terminus (XRCC4/C), which translocates to the cytoplasm and activates phospholipid scramblase activity of XKR4, thereby promoting phosphatidylserine exposure on apoptotic cell surface. In terms of tissue distribution, widely expressed.

Its subcellular location is the nucleus. The protein localises to the chromosome. It localises to the cytoplasm. DNA non-homologous end joining (NHEJ) core factor, required for double-strand break repair and V(D)J recombination. Acts as a scaffold protein that regulates recruitment of other proteins to DNA double-strand breaks (DSBs). Associates with NHEJ1/XLF to form alternating helical filaments that bridge DNA and act like a bandage, holding together the broken DNA until it is repaired. The XRCC4-NHEJ1/XLF subcomplex binds to the DNA fragments of a DSB in a highly diffusive manner and robustly bridges two independent DNA molecules, holding the broken DNA fragments in close proximity to one other. The mobility of the bridges ensures that the ends remain accessible for further processing by other repair factors. Plays a key role in the NHEJ ligation step of the broken DNA during DSB repair via direct interaction with DNA ligase IV (LIG4): the LIG4-XRCC4 subcomplex reseals the DNA breaks after the gap filling is completed. XRCC4 stabilizes LIG4, regulates its subcellular localization and enhances LIG4's joining activity. Binding of the LIG4-XRCC4 subcomplex to DNA ends is dependent on the assembly of the DNA-dependent protein kinase complex DNA-PK to these DNA ends. Promotes displacement of PNKP from processed strand break termini. In terms of biological role, acts as an activator of the phospholipid scramblase activity of XKR4. This form, which is generated upon caspase-3 (CASP3) cleavage, translocates into the cytoplasm and interacts with XKR4, thereby promoting phosphatidylserine scramblase activity of XKR4 and leading to phosphatidylserine exposure on apoptotic cell surface. This chain is DNA repair protein XRCC4, found in Homo sapiens (Human).